Consider the following 828-residue polypeptide: Protein kintoun (828 aa).

5 disordered regions span residues 1-31 (MSGSTASARNKHSKGNLKHNNNKNKNNDEPI), 223-250 (KNPTDEELEPHPLEHSFPTKPTAGEGEP), 383-424 (DSGV…PTSN), 556-668 (APVQ…HRGI), and 741-828 (KKNQ…EDLI). Residues 9-22 (RNKHSKGNLKHNNN) show a composition bias toward basic residues. At S384 the chain carries Phosphoserine. Residues 395-414 (PVEEEEDGEDEIEAEEEEEE) are compositionally biased toward acidic residues. Basic and acidic residues predominate over residues 556–573 (APVQEDKPGDIQFKRNDQ). Residues 591–601 (EREEGEIEEAE) show a composition bias toward acidic residues. Over residues 606 to 620 (KKSASKKQRGKRNKK) the composition is skewed to basic residues. The segment covering 625–641 (SESACVSLPTSVDSQPM) has biased composition (polar residues). Basic residues predominate over residues 741-755 (KKNQKRRDCKLRAQQ). S759 carries the phosphoserine modification. The span at 788–808 (DSGLDLTRHNKKRELAEEADN) shows a compositional bias: basic and acidic residues. Residues 815–828 (EMDDDDDDEDEDLI) are compositionally biased toward acidic residues.

This sequence belongs to the PIH1 family. Kintoun subfamily. As to quaternary structure, interacts with Pp1alpha-96A, Pp1-87B, Pp1-13C and flw.

The protein localises to the cytoplasm. In terms of biological role, required for cytoplasmic pre-assembly of axonemal dyneins, thereby playing a central role in motility in cilia and flagella. Involved in pre-assembly of dynein arm complexes in the cytoplasm before intraflagellar transport loads them for the ciliary compartment. The protein is Protein kintoun of Drosophila willistoni (Fruit fly).